Consider the following 819-residue polypeptide: MDEHYQAIQIEAEAQAYWEQHQSFRASEDPSKEKFYCLSMFPYPSGRLHMGHVRNYTIGDVISRYQRMRGRNVLQPMGWDAFGLPAENAAIQNRVPPAQWTYENIDHMRRQLKRLGFAYDWSRELATCQPDYYRWEQWLFTKLFAKGLVYKKTALVNWDPVDQTVLANEQVIDGRGWRSGALVERREIPQWFLKITAYGEELLTALDGLTGWPEQVRAMQRNWIGRSEGIEVQFHVEGKEALAVFTTRPDTLMGVTFVSVAAEHPLAREAATSNPALAAFLEQCQRTATSEAILETLEKEGMDTGFKAIHPITGEAVPIWVANFVLMGYGTGAVMAVPAHDQRDYEFAKVYGLPIQQVIAPKDDQASCNLEQSAFVEKGLLINSGDFTGLDFDQAFAAIAEHLERGGKGQRRVNYRLRDWGVSRQRYWGAPIPIVHCLHCGAIPVPEEDLPVVLPERVRFDGIRSPLKQLPEFYQTSCPQCGGQAKRETDTFDTFFESSWYYARYCCPDNNATMVDERGDYWLPVDQYIGGIEHAVLHLLYARFFHKVMRDMGLVRSDEPFTHLLTQGMVLKDGAKMSKSKGNTVDPQALIEHYGADTARLFIMFAAPPEQSLEWSESGVEGAHRFLKRLWRIVAAHVEQDPKAALTLKVKDLNSEQKSFRAKVHETIAKASDDIGRRYTFNTAIAAIMELMNALAKFDDSSPQGQAIRQEALEAVVLLLSPITPHICHRLWQELGHREAIIGVPWPEADPDALAKESIELVVQVNGKRRGQITVAVQAPREEIEGQAQAEPNVQRFIEGKTVQKVIIVPNRLVNLVVS.

Residues 42-52 (PYPSGRLHMGH) carry the 'HIGH' region motif. Positions 576-580 (KMSKS) match the 'KMSKS' region motif. Lys579 serves as a coordination point for ATP.

It belongs to the class-I aminoacyl-tRNA synthetase family.

The protein localises to the cytoplasm. The enzyme catalyses tRNA(Leu) + L-leucine + ATP = L-leucyl-tRNA(Leu) + AMP + diphosphate. In Nitrosococcus oceani (strain ATCC 19707 / BCRC 17464 / JCM 30415 / NCIMB 11848 / C-107), this protein is Leucine--tRNA ligase.